Consider the following 242-residue polypeptide: Uridylate kinase (242 aa).

Residue 11-14 (KLSG) coordinates ATP. Residues 19–24 (GNMGYG) form an involved in allosteric activation by GTP region. Position 53 (Gly53) interacts with UMP. The ATP site is built by Gly54 and Arg58. UMP is bound by residues Asp73 and 134–141 (SGNPFFTT). Residues Thr161, Tyr167, and Asp170 each coordinate ATP.

The protein belongs to the UMP kinase family. As to quaternary structure, homohexamer.

Its subcellular location is the cytoplasm. The catalysed reaction is UMP + ATP = UDP + ADP. Its pathway is pyrimidine metabolism; CTP biosynthesis via de novo pathway; UDP from UMP (UMPK route): step 1/1. Its activity is regulated as follows. Allosterically activated by GTP. Inhibited by UTP. In terms of biological role, catalyzes the reversible phosphorylation of UMP to UDP. The protein is Uridylate kinase of Trichormus variabilis (strain ATCC 29413 / PCC 7937) (Anabaena variabilis).